The primary structure comprises 522 residues: N-acetylgalactosamine-6-sulfatase (522 aa).

A signal peptide spans 1-25; sequence MAAVAAATRWHLLLVLSAAGLGVTG. The tract at residues 27-379 is catalytic domain; the sequence is PQPPNILLLL…PAMLQGRLTE (353 aa). The Ca(2+) site is built by Asp38, Asp39, and Cys78. Cys78 acts as the Nucleophile in catalysis. Cys78 bears the 3-oxoalanine (Cys) mark. His141 is a catalytic residue. Asn203 carries N-linked (GlcNAc...) asparagine glycosylation. Ca(2+) is bound by residues Asp288 and Asn289. Cys308 and Cys419 form a disulfide bridge. An N-linked (GlcNAc...) asparagine glycan is attached at Asn423. Disulfide bonds link Cys489–Cys518 and Cys501–Cys507.

This sequence belongs to the sulfatase family. As to quaternary structure, homodimer. Ca(2+) serves as cofactor. In terms of processing, the conversion to 3-oxoalanine (also known as C-formylglycine, FGly), of a serine or cysteine residue in prokaryotes and of a cysteine residue in eukaryotes, is critical for catalytic activity.

The protein resides in the lysosome. It carries out the reaction Hydrolysis of the 6-sulfate groups of the N-acetyl-D-galactosamine 6-sulfate units of chondroitin sulfate and of the D-galactose 6-sulfate units of keratan sulfate.. This chain is N-acetylgalactosamine-6-sulfatase (GALNS), found in Sus scrofa (Pig).